A 373-amino-acid chain; its full sequence is Anhydro-N-acetylmuramic acid kinase (373 aa).

13-20 lines the ATP pocket; sequence GTSMDGID.

It belongs to the anhydro-N-acetylmuramic acid kinase family.

It carries out the reaction 1,6-anhydro-N-acetyl-beta-muramate + ATP + H2O = N-acetyl-D-muramate 6-phosphate + ADP + H(+). Its pathway is amino-sugar metabolism; 1,6-anhydro-N-acetylmuramate degradation. It participates in cell wall biogenesis; peptidoglycan recycling. In terms of biological role, catalyzes the specific phosphorylation of 1,6-anhydro-N-acetylmuramic acid (anhMurNAc) with the simultaneous cleavage of the 1,6-anhydro ring, generating MurNAc-6-P. Is required for the utilization of anhMurNAc either imported from the medium or derived from its own cell wall murein, and thus plays a role in cell wall recycling. In Brucella abortus (strain 2308), this protein is Anhydro-N-acetylmuramic acid kinase.